We begin with the raw amino-acid sequence, 206 residues long: Small ribosomal subunit protein uS4 (206 aa).

The S4 RNA-binding domain occupies 96–156 (CRLDNVVYRM…EKAKNQLRIV (61 aa)).

This sequence belongs to the universal ribosomal protein uS4 family. Part of the 30S ribosomal subunit. Contacts protein S5. The interaction surface between S4 and S5 is involved in control of translational fidelity.

Its function is as follows. One of the primary rRNA binding proteins, it binds directly to 16S rRNA where it nucleates assembly of the body of the 30S subunit. In terms of biological role, with S5 and S12 plays an important role in translational accuracy. This Pseudomonas savastanoi pv. phaseolicola (strain 1448A / Race 6) (Pseudomonas syringae pv. phaseolicola (strain 1448A / Race 6)) protein is Small ribosomal subunit protein uS4.